A 130-amino-acid polypeptide reads, in one-letter code: Small ribosomal subunit protein uS8 (130 aa).

It belongs to the universal ribosomal protein uS8 family. As to quaternary structure, part of the 30S ribosomal subunit.

Its function is as follows. One of the primary rRNA binding proteins, it binds directly to 16S rRNA central domain where it helps coordinate assembly of the platform of the 30S subunit. The chain is Small ribosomal subunit protein uS8 from Methanococcus maripaludis (strain C5 / ATCC BAA-1333).